We begin with the raw amino-acid sequence, 273 residues long: NH(3)-dependent NAD(+) synthetase (273 aa).

47–54 lines the ATP pocket; it reads GISGGQDS. Residue aspartate 53 coordinates Mg(2+). Arginine 139 is a binding site for deamido-NAD(+). Threonine 159 is a binding site for ATP. Position 164 (glutamate 164) interacts with Mg(2+). Lysine 172 and aspartate 179 together coordinate deamido-NAD(+). ATP-binding residues include lysine 188 and threonine 210. Position 259-260 (259-260) interacts with deamido-NAD(+); that stretch reads HK.

The protein belongs to the NAD synthetase family. As to quaternary structure, homodimer.

The enzyme catalyses deamido-NAD(+) + NH4(+) + ATP = AMP + diphosphate + NAD(+) + H(+). Its pathway is cofactor biosynthesis; NAD(+) biosynthesis; NAD(+) from deamido-NAD(+) (ammonia route): step 1/1. In terms of biological role, catalyzes the ATP-dependent amidation of deamido-NAD to form NAD. Uses ammonia as a nitrogen source. The chain is NH(3)-dependent NAD(+) synthetase from Staphylococcus aureus (strain MRSA252).